Reading from the N-terminus, the 271-residue chain is MTYLQESSRPAVTVPKLQAMREAGEKIAMLTCYDASFAALLDRANVDVQLIGDSLGNVLQGQTTTLPVTLDDIAYHTACVARAQPRALIVADLPFGTYGTPADAFASAVKLMRAGAQMVKFEGGEWLAETVRFLVERAVPVCAHVGLTPQSVHAFGGFKVQGKTEAGAAQLLRDARAVEEAGAQLIVLEAVPTLVAAEVTRELSIPTIGIGAGAECSGQVLVLHDMLGVFPGKRPRFVKDFMQGQPSIFAAVEAYVRAVKDGSFPGPEHSF.

Mg(2+) is bound by residues Asp-53 and Asp-92. Residues Asp-53–Ser-54, Asp-92, and Lys-120 contribute to the 3-methyl-2-oxobutanoate site. Glu-122 serves as a coordination point for Mg(2+). Glu-189 acts as the Proton acceptor in catalysis.

Belongs to the PanB family. As to quaternary structure, homodecamer; pentamer of dimers. Requires Mg(2+) as cofactor.

Its subcellular location is the cytoplasm. The catalysed reaction is 3-methyl-2-oxobutanoate + (6R)-5,10-methylene-5,6,7,8-tetrahydrofolate + H2O = 2-dehydropantoate + (6S)-5,6,7,8-tetrahydrofolate. The protein operates within cofactor biosynthesis; (R)-pantothenate biosynthesis; (R)-pantoate from 3-methyl-2-oxobutanoate: step 1/2. Functionally, catalyzes the reversible reaction in which hydroxymethyl group from 5,10-methylenetetrahydrofolate is transferred onto alpha-ketoisovalerate to form ketopantoate. This is 3-methyl-2-oxobutanoate hydroxymethyltransferase from Burkholderia thailandensis (strain ATCC 700388 / DSM 13276 / CCUG 48851 / CIP 106301 / E264).